A 718-amino-acid polypeptide reads, in one-letter code: Ribosomal RNA large subunit methyltransferase K/L (718 aa).

A THUMP domain is found at 44 to 155 (DAYKVCIYSH…KQYVNVFLCL (112 aa)).

It belongs to the methyltransferase superfamily. RlmKL family.

The protein resides in the cytoplasm. The enzyme catalyses guanosine(2445) in 23S rRNA + S-adenosyl-L-methionine = N(2)-methylguanosine(2445) in 23S rRNA + S-adenosyl-L-homocysteine + H(+). It carries out the reaction guanosine(2069) in 23S rRNA + S-adenosyl-L-methionine = N(2)-methylguanosine(2069) in 23S rRNA + S-adenosyl-L-homocysteine + H(+). Its function is as follows. Specifically methylates the guanine in position 2445 (m2G2445) and the guanine in position 2069 (m7G2069) of 23S rRNA. This is Ribosomal RNA large subunit methyltransferase K/L from Francisella philomiragia subsp. philomiragia (strain ATCC 25017 / CCUG 19701 / FSC 153 / O#319-036).